The sequence spans 551 residues: Cation/acetate symporter ActP (551 aa).

Helical transmembrane passes span histidine 5–glycine 25, isoleucine 34–alanine 54, glycine 77–valine 97, glycine 104–glutamate 124, leucine 150–alanine 170, valine 184–alanine 204, tryptophan 207–valine 227, isoleucine 263–leucine 283, glycine 304–valine 324, phenylalanine 356–leucine 376, valine 406–glutamate 426, isoleucine 430–isoleucine 450, leucine 469–leucine 489, and tyrosine 498–isoleucine 518.

It belongs to the sodium:solute symporter (SSF) (TC 2.A.21) family.

It is found in the cell inner membrane. Transports acetate. The chain is Cation/acetate symporter ActP from Yersinia pseudotuberculosis serotype IB (strain PB1/+).